A 186-amino-acid chain; its full sequence is Two-component response regulator ARR6 (186 aa).

The region spanning 26–153 is the Response regulatory domain; it reads HVLAVDDSHV…DVKRLRDSLM (128 aa). A 4-aspartylphosphate modification is found at aspartate 86.

This sequence belongs to the ARR family. Type-A subfamily. In terms of processing, two-component system major event consists of a His-to-Asp phosphorelay between a sensor histidine kinase (HK) and a response regulator (RR). In plants, the His-to-Asp phosphorelay involves an additional intermediate named Histidine-containing phosphotransfer protein (HPt). This multistep phosphorelay consists of a His-Asp-His-Asp sequential transfer of a phosphate group between first a His and an Asp of the HK protein, followed by the transfer to a conserved His of the HPt protein and finally the transfer to an Asp in the receiver domain of the RR protein. Predominantly expressed in roots.

It localises to the nucleus. Functionally, functions as a response regulator involved in His-to-Asp phosphorelay signal transduction system. Phosphorylation of the Asp residue in the receiver domain activates the ability of the protein to promote the transcription of target genes. Type-A response regulators seem to act as negative regulators of the cytokinin signaling. The sequence is that of Two-component response regulator ARR6 (ARR6) from Arabidopsis thaliana (Mouse-ear cress).